The following is a 235-amino-acid chain: Orotidine 5'-phosphate decarboxylase (235 aa).

Substrate-binding positions include D11, K33, 60–69 (DLKFHDIPNT), T119, R180, Q189, G209, and R210. The Proton donor role is filled by K62.

This sequence belongs to the OMP decarboxylase family. Type 1 subfamily. In terms of assembly, homodimer.

It catalyses the reaction orotidine 5'-phosphate + H(+) = UMP + CO2. It functions in the pathway pyrimidine metabolism; UMP biosynthesis via de novo pathway; UMP from orotate: step 2/2. Its function is as follows. Catalyzes the decarboxylation of orotidine 5'-monophosphate (OMP) to uridine 5'-monophosphate (UMP). The protein is Orotidine 5'-phosphate decarboxylase of Alkalilimnicola ehrlichii (strain ATCC BAA-1101 / DSM 17681 / MLHE-1).